The primary structure comprises 347 residues: GDT1-like protein 2, chloroplastic (347 aa).

The transit peptide at 1–12 directs the protein to the chloroplast; sequence MATAISVGVAVP. The segment at 70–97 is disordered; it reads EAGSHGEHLDSSATRDSNKPTKPPSGSR. Helical transmembrane passes span 99-119, 124-144, 165-185, 196-216, 257-277, 299-319, and 327-347; these read PQSI…IVFF, SAVV…LIFV, ALVL…SVII, FQTT…FFGF, LTSP…AEWG, GAIA…AFLA, and VGLI…FGVF.

Belongs to the GDT1 family.

Its subcellular location is the plastid. It localises to the chloroplast membrane. This chain is GDT1-like protein 2, chloroplastic, found in Oryza sativa subsp. japonica (Rice).